Consider the following 412-residue polypeptide: DNA polymerase IV 2 (412 aa).

Residues 7-192 form the UmuC domain; it reads IFLVDMQSFY…LPVGSMFGVG (186 aa). Asp11 and Asp107 together coordinate Mg(2+). Glu108 is a catalytic residue.

The protein belongs to the DNA polymerase type-Y family. In terms of assembly, monomer. Mg(2+) is required as a cofactor.

Its subcellular location is the cytoplasm. It carries out the reaction DNA(n) + a 2'-deoxyribonucleoside 5'-triphosphate = DNA(n+1) + diphosphate. Poorly processive, error-prone DNA polymerase involved in untargeted mutagenesis. Copies undamaged DNA at stalled replication forks, which arise in vivo from mismatched or misaligned primer ends. These misaligned primers can be extended by PolIV. Exhibits no 3'-5' exonuclease (proofreading) activity. May be involved in translesion synthesis (TSL), in conjunction with the beta clamp from PolIII. The chain is DNA polymerase IV 2 (dinB2) from Bacillus subtilis (strain 168).